Consider the following 426-residue polypeptide: Glutamate-1-semialdehyde 2,1-aminomutase 2 (426 aa).

Lysine 265 bears the N6-(pyridoxal phosphate)lysine mark.

It belongs to the class-III pyridoxal-phosphate-dependent aminotransferase family. HemL subfamily. Homodimer. Pyridoxal 5'-phosphate serves as cofactor.

It is found in the cytoplasm. It catalyses the reaction (S)-4-amino-5-oxopentanoate = 5-aminolevulinate. Its pathway is porphyrin-containing compound metabolism; protoporphyrin-IX biosynthesis; 5-aminolevulinate from L-glutamyl-tRNA(Glu): step 2/2. The sequence is that of Glutamate-1-semialdehyde 2,1-aminomutase 2 from Lachnoclostridium phytofermentans (strain ATCC 700394 / DSM 18823 / ISDg) (Clostridium phytofermentans).